We begin with the raw amino-acid sequence, 1295 residues long: Nonribosomal peptide synthetase resC (1295 aa).

Positions 1 to 24 (MDLTTTSHARVDSGGVPFTSSLND) are disordered. An adenylation region spans residues 221 to 624 (KDVVDASPQA…EGRKDTQIKL (404 aa)). Positions 759-836 (ESANPAEENL…DQANLLRPLV (78 aa)) constitute a Carrier domain. Ser796 bears the O-(pantetheine 4'-phosphoryl)serine mark. The segment at 873–1284 (EDVYPCTPYQ…DEYSQTLHEL (412 aa)) is condensation.

This sequence belongs to the NRP synthetase family. Pantetheine 4'-phosphate serves as cofactor.

The enzyme catalyses restrictinol + glycine + H(+) = restricticin + H2O. It functions in the pathway antifungal biosynthesis. Nonribosomal peptide synthetase; part of the gene cluster that mediates the biosynthesis of the tetrahydropyranyl antifungal agent restricticin that acts as an inhibitor of CYP51 and blocks the ergosterol biosynthesis. Within the pathway, resC catalyzes the C3 esterification of restrictinol with glycine to yield restricticin. ResC represents an example of the emerging class of single-module NRPS-like enzymes that perform esterification reactions. The highly reducing polyketide synthase resH, the short chain dehydrogenase resG, the cyclase resF, the FAD-dependent monooxygenase resA and the enoylreductase resD are required to generate the first stable intermediate desmethylrestrictinol. ResH with resD biosynthesize the first polyketide chain intermediate that is reduced by resG, followed by epoxidation by resA before 6-endo cyclization via epoxide opening by resF leads to desmethylrestrictinol. The methyltransferase resE then catalyzes the C4 O-methylation of desmethylrestrictinol to produce restrictinol, and the nonribosomal peptide synthetase resC catalyzes the C3 esterification of restrictinol with glycine that leads to restricticin. The polypeptide is Nonribosomal peptide synthetase resC (Aspergillus sclerotiorum).